The sequence spans 1076 residues: Serine/threonine-protein phosphatase 6 regulatory ankyrin repeat subunit C (1076 aa).

28 ANK repeats span residues 7–36 (TDQP…NINV), 40–69 (ERRT…NVNA), 73–102 (LWLT…DVNA), 106–135 (LWQT…SLNV), 139–168 (SGRS…SLNV), 172–201 (KERQ…DLGC), 205–234 (KGYG…EIDE), 238–267 (FGNT…NVNQ), 271–301 (KGFT…DVNY), 305–334 (EGKS…EIDC), 338–367 (FGNT…DTAR), 371–400 (HDMF…LYSI), 422–451 (LGRT…DLRR), 455–484 (FGRT…GVNE), 488–545 (KGCS…DPSL), 549–579 (QGYT…CLED), 584–613 (IPVS…NLDV), 617–646 (KGRT…SALI), 651–680 (RKWT…RADI), 687–716 (YGQT…TADA), 720–749 (RGRT…FVLC), 753–782 (KGRT…STDP), 790–819 (SGYS…FSYL), 822–852 (NPFT…KIVN), 857–886 (KGRT…EVNA), 890–920 (TGRT…DLTV), 924–953 (NKNT…DLGL), and 960–989 (ALQM…TVLA). Residues 502–514 (YRRAEPHTPSSHD) show a composition bias toward basic and acidic residues. The disordered stretch occupies residues 502 to 522 (YRRAEPHTPSSHDAEEDEPLK). 2 positions are modified to phosphoserine: S1028 and S1075.

Protein phosphatase 6 (PP6) holoenzyme is proposed to be a heterotrimeric complex formed by the catalytic subunit, a SAPS domain-containing subunit (PP6R) and an ankyrin repeat-domain containing regulatory subunit (ARS). Interacts with PPP6R1.

Putative regulatory subunit of protein phosphatase 6 (PP6) that may be involved in the recognition of phosphoprotein substrates. The polypeptide is Serine/threonine-protein phosphatase 6 regulatory ankyrin repeat subunit C (ANKRD52) (Homo sapiens (Human)).